We begin with the raw amino-acid sequence, 194 residues long: Histone H1.0 (194 aa).

An N-acetylmethionine modification is found at M1. Positions 1–11 are enriched in low complexity; it reads MTENSTSAPAA. The tract at residues 1-28 is disordered; sequence MTENSTSAPAAKPKRAKASKKSTDHPKY. T2 carries the N-acetylthreonine; in Histone H1.0, N-terminally processed modification. Residues 24 to 97 form the H15 domain; the sequence is DHPKYSDMIV…GASGSFRLAK (74 aa). R42 bears the Citrulline mark. The segment at 86–194 is disordered; the sequence is GVGASGSFRL…SSAKRASKKK (109 aa). S104 carries the ADP-ribosylserine modification. The span at 105–194 shows a compositional bias: basic residues; the sequence is VAFKKTKKEV…SSAKRASKKK (90 aa).

This sequence belongs to the histone H1/H5 family. ADP-ribosylated on Ser-104 in response to DNA damage.

Its subcellular location is the nucleus. The protein resides in the chromosome. Its function is as follows. Histones H1 are necessary for the condensation of nucleosome chains into higher-order structures. The histones H1.0 are found in cells that are in terminal stages of differentiation or that have low rates of cell division. The chain is Histone H1.0 (H1-0) from Mus musculus (Mouse).